The following is a 283-amino-acid chain: 4-diphosphocytidyl-2-C-methyl-D-erythritol kinase (283 aa).

The active site involves lysine 12. ATP is bound at residue 94–104 (PAQAGLGGGSS). The active site involves aspartate 136.

The protein belongs to the GHMP kinase family. IspE subfamily.

The catalysed reaction is 4-CDP-2-C-methyl-D-erythritol + ATP = 4-CDP-2-C-methyl-D-erythritol 2-phosphate + ADP + H(+). The protein operates within isoprenoid biosynthesis; isopentenyl diphosphate biosynthesis via DXP pathway; isopentenyl diphosphate from 1-deoxy-D-xylulose 5-phosphate: step 3/6. Functionally, catalyzes the phosphorylation of the position 2 hydroxy group of 4-diphosphocytidyl-2C-methyl-D-erythritol. The chain is 4-diphosphocytidyl-2-C-methyl-D-erythritol kinase from Acidovorax sp. (strain JS42).